A 702-amino-acid polypeptide reads, in one-letter code: Elongation factor G (702 aa).

A tr-type G domain is found at 8–196 (ERYRNIGISA…MKAIIWDEAS (189 aa)). GTP contacts are provided by residues 17–24 (AHIDAGKT), 88–92 (DTPGH), and 142–145 (NKMD).

This sequence belongs to the TRAFAC class translation factor GTPase superfamily. Classic translation factor GTPase family. EF-G/EF-2 subfamily.

It localises to the cytoplasm. Functionally, catalyzes the GTP-dependent ribosomal translocation step during translation elongation. During this step, the ribosome changes from the pre-translocational (PRE) to the post-translocational (POST) state as the newly formed A-site-bound peptidyl-tRNA and P-site-bound deacylated tRNA move to the P and E sites, respectively. Catalyzes the coordinated movement of the two tRNA molecules, the mRNA and conformational changes in the ribosome. The polypeptide is Elongation factor G (fusA) (Thiomonas delicata (Thiomonas cuprina)).